A 652-amino-acid chain; its full sequence is UvrABC system protein C (652 aa).

In terms of domain architecture, GIY-YIG spans 20–99 (PEPGCYLMRD…IKNHQPHFNV (80 aa)). A UVR domain is found at 209–244 (DELQRLLDEQMNRYAERLDFESAARVRDQLQGLDQL).

It belongs to the UvrC family. In terms of assembly, interacts with UvrB in an incision complex.

It is found in the cytoplasm. Its function is as follows. The UvrABC repair system catalyzes the recognition and processing of DNA lesions. UvrC both incises the 5' and 3' sides of the lesion. The N-terminal half is responsible for the 3' incision and the C-terminal half is responsible for the 5' incision. This Parasynechococcus marenigrum (strain WH8102) protein is UvrABC system protein C.